We begin with the raw amino-acid sequence, 1752 residues long: DNA-directed RNA polymerase II subunit rpb1 (1752 aa).

Cysteine 69, cysteine 72, cysteine 79, histidine 82, cysteine 109, cysteine 112, cysteine 150, and cysteine 175 together coordinate Zn(2+). Residues aspartate 487, aspartate 489, and aspartate 491 each contribute to the Mg(2+) site. The interval 816–828 is bridging helix; sequence PQEFFFHAMAGRE. A Glycyl lysine isopeptide (Lys-Gly) (interchain with G-Cter in ubiquitin) cross-link involves residue lysine 1252. A phosphoserine mark is found at serine 1489, serine 1499, serine 1506, and serine 1529. Phosphotyrosine is present on tyrosine 1531. Positions 1554 to 1752 are disordered; it reads TSPSYSPSSP…SPSYSPTSPS (199 aa). 5 tandem repeats follow at residues 1558–1564, 1578–1584, 1585–1591, 1592–1598, and 1599–1605. A C-terminal domain (CTD); 26 X 7 AA approximate tandem repeats of Y-S-P-[TS]-S-P-S region spans residues 1558-1752; it reads YSPSSPGYST…SPSYSPTSPS (195 aa). Residues 1606-1612 form a 6; approximate repeat; the sequence is YSATSPS. 20 consecutive repeat copies span residues 1613–1619, 1620–1626, 1627–1633, 1634–1640, 1641–1647, 1648–1654, 1655–1661, 1662–1668, 1669–1675, 1676–1682, 1683–1689, 1690–1696, 1697–1703, 1704–1710, 1711–1717, 1718–1724, 1725–1731, 1732–1738, 1739–1745, and 1746–1752.

Belongs to the RNA polymerase beta' chain family. Component of the RNA polymerase II (Pol II) complex consisting of 12 subunits. In terms of processing, the tandem 7 residues repeats in the C-terminal domain (CTD) can be highly phosphorylated. The phosphorylation activates Pol II. Phosphorylation occurs mainly at residues 'Ser-2' and 'Ser-5' of the heptapeptide repeat. The phosphorylation state is believed to result from the balanced action of site-specific CTD kinases and phosphatase, and a 'CTD code' that specifies the position of Pol II within the transcription cycle has been proposed. Post-translationally, following transcription stress, the elongating form of RNA polymerase II (RNA pol IIo) is polyubiquitinated via 'Lys-63'-linkages on Lys-1252 at DNA damage sites without leading to degradation: ubiquitination promotes RNA pol IIo backtracking to allow access by the transcription-coupled nucleotide excision repair (TC-NER) machinery. Subsequent def1-dependent polyubiquitination by the elongin complex via 'Lys-48'-linkages may lead to proteasome-mediated degradation; presumably at stalled RNA pol II where TC-NER has failed, to halt global transcription and enable 'last resort' DNA repair pathways.

It localises to the nucleus. The enzyme catalyses RNA(n) + a ribonucleoside 5'-triphosphate = RNA(n+1) + diphosphate. Functionally, DNA-dependent RNA polymerase catalyzes the transcription of DNA into RNA using the four ribonucleoside triphosphates as substrates. Largest and catalytic component of RNA polymerase II which synthesizes mRNA precursors and many functional non-coding RNAs. Forms the polymerase active center together with the second largest subunit. Pol II is the central component of the basal RNA polymerase II transcription machinery. It is composed of mobile elements that move relative to each other. RPB1 is part of the core element with the central large cleft, the clamp element that moves to open and close the cleft and the jaws that are thought to grab the incoming DNA template. At the start of transcription, a single-stranded DNA template strand of the promoter is positioned within the central active site cleft of Pol II. A bridging helix emanates from RPB1 and crosses the cleft near the catalytic site and is thought to promote translocation of Pol II by acting as a ratchet that moves the RNA-DNA hybrid through the active site by switching from straight to bent conformations at each step of nucleotide addition. During transcription elongation, Pol II moves on the template as the transcript elongates. Elongation is influenced by the phosphorylation status of the C-terminal domain (CTD) of Pol II largest subunit (RPB1), which serves as a platform for assembly of factors that regulate transcription initiation, elongation, termination and mRNA processing. The chain is DNA-directed RNA polymerase II subunit rpb1 (rpb1) from Schizosaccharomyces pombe (strain 972 / ATCC 24843) (Fission yeast).